The following is a 539-amino-acid chain: MIPSSKPNSRVELRFRCHHLKNLDIVSKSDPQIFISEKRGPGGFQFVDCTEKIKNNLSPEFKKTITLDYYFEEIQTLTFTVMDIDKEITLFGDLDKNDKIGEFTTSLSNILSRPGRKIVADLIHHSKVTGKIEISAEEICQTNHHIFLSAEGIGLDKKDLFSSDPYYKIYKTNPNGEQLLVFQSIVIKSNVNPLWPELHMELEKFNGGDMFRELLIEVYDYDSIGAHDLIGITRTTTDAILRGVIEYPLINPKKTSKSGYKNSGILKFYKVRLEKTHTFLEFLAGGCEISLMTAIDCTGSNGSVNSFSGLHYNDLEKGGSAYARSIASVGSVLSSYDSDGFIDVFGFGGEYQGRTSHCFPFSLDPNVPSAFGVAGVLEMYNRNISKIPFSGPTNFASVIQEAIARASESRLPYQQKYTVLLIITDGEICDMDETIKCLVQASNLPLSVVIVGVGLSSFENMNLLDGDNGCLVDYKGNRAKRDIVQFVPFNKYSGNINALAQETLKEIPGQLLSYFKSIGVPPNPPRTFIPVDILPPPPQ.

C2 domains lie at 1-120 and 128-251; these read MIPS…KIVA and VTGK…PLIN. Ca(2+) is bound by residues Leu23, Asp24, Asp30, Asp83, Asp85, and Asp98. The 218-residue stretch at 290–507 folds into the VWFA domain; that stretch reads SLMTAIDCTG…ALAQETLKEI (218 aa).

Belongs to the copine family. Ca(2+) serves as cofactor.

The chain is Copine-C (cpnC) from Dictyostelium discoideum (Social amoeba).